We begin with the raw amino-acid sequence, 152 residues long: Transcriptional regulator MraZ (152 aa).

2 SpoVT-AbrB domains span residues 5-52 (ASAI…PADE) and 81-124 (AHEI…DEAQ).

The protein belongs to the MraZ family. In terms of assembly, forms oligomers.

It localises to the cytoplasm. The protein resides in the nucleoid. In Shewanella amazonensis (strain ATCC BAA-1098 / SB2B), this protein is Transcriptional regulator MraZ.